The following is a 448-amino-acid chain: Neurexin-1b-beta (448 aa).

An N-terminal signal peptide occupies residues 1–38 (MFGGWRLVVWQIFSEIITRRLGFWICLYFAALSVGMIS). Residues 39-375 (GSEPLVRTRH…EVFRESNGTT (337 aa)) are Extracellular-facing. Positions 71 to 269 (STYVFGRQGG…DPNVRMEGSV (199 aa)) constitute a Laminin G-like domain. The helical transmembrane segment at 376–396 (GMVVGIVAGAALCILILLYAM) threads the bilayer. Over 397–448 (YKYRNRDEGSYHVDESRNYICNSNGAALKEKNTADDDSGSKSKKNKNKEYYV) the chain is Cytoplasmic. Residues 426–436 (EKNTADDDSGS) show a composition bias toward basic and acidic residues. Residues 426-448 (EKNTADDDSGSKSKKNKNKEYYV) form a disordered region.

The protein belongs to the neurexin family.

The protein resides in the membrane. Functionally, neuronal cell surface protein that may be involved in cell recognition and cell adhesion. May play a role in formation or maintenance of synaptic junctions. The polypeptide is Neurexin-1b-beta (nrxn1b) (Danio rerio (Zebrafish)).